The sequence spans 167 residues: Mitochondrial fission 1 protein B (167 aa).

A TPR repeat occupies 92 to 125 (REKLYLLALGYYRSGDFSRSRDCIERCLEVEPES). A helical membrane pass occupies residues 144 to 164 (VIGVGIAVTAVGVVAGIAAAI).

Belongs to the FIS1 family. In terms of assembly, interacts with PEX11A, PEX11B, PEX11C, PEX11D and PEX11E.

The protein localises to the mitochondrion outer membrane. The protein resides in the peroxisome membrane. In terms of biological role, component of the peroxisomal and mitochondrial division machineries. Plays a role in promoting the fission of mitochondria and peroxisomes. In association with PEX11C, PEX11D, PEX11E and DRP3A, is involved in cell cycle-associated constitutive self-replication of preexisting peroxisomes. The chain is Mitochondrial fission 1 protein B (FIS1B) from Arabidopsis thaliana (Mouse-ear cress).